An 83-amino-acid chain; its full sequence is Mu-theraphotoxin-Hhn2i (83 aa).

Residues 1 to 21 form the signal peptide; sequence MKASMFLALAGLVLLFVVGYA. Residues 22-48 constitute a propeptide that is removed on maturation; it reads SESEEKEFPRELLSKIFAVDDFKGEER. 3 cysteine pairs are disulfide-bonded: C50-C65, C57-C70, and C64-C77. Residue L81 is modified to Leucine amide.

Belongs to the neurotoxin 10 (Hwtx-1) family. 15 (Hntx-3) subfamily. As to quaternary structure, monomer. As to expression, expressed by the venom gland.

The protein resides in the secreted. Functionally, lethal neurotoxin. Selectively blocks tetrodotoxin-sensitive voltage-gated sodium channels (Nav). Does not affect tetrodotoxin-resistant voltage-gated sodium channels or calcium channels. This Cyriopagopus hainanus (Chinese bird spider) protein is Mu-theraphotoxin-Hhn2i.